The primary structure comprises 212 residues: Urease accessory protein UreG (212 aa).

Residue 11–18 (GPVGSGKT) participates in GTP binding.

Belongs to the SIMIBI class G3E GTPase family. UreG subfamily. Homodimer. UreD, UreF and UreG form a complex that acts as a GTP-hydrolysis-dependent molecular chaperone, activating the urease apoprotein by helping to assemble the nickel containing metallocenter of UreC. The UreE protein probably delivers the nickel.

The protein localises to the cytoplasm. In terms of biological role, facilitates the functional incorporation of the urease nickel metallocenter. This process requires GTP hydrolysis, probably effectuated by UreG. This chain is Urease accessory protein UreG, found in Trichodesmium erythraeum (strain IMS101).